We begin with the raw amino-acid sequence, 316 residues long: Transaldolase (316 aa).

K132 acts as the Schiff-base intermediate with substrate in catalysis.

It belongs to the transaldolase family. Type 1 subfamily. Homodimer.

Its subcellular location is the cytoplasm. The catalysed reaction is D-sedoheptulose 7-phosphate + D-glyceraldehyde 3-phosphate = D-erythrose 4-phosphate + beta-D-fructose 6-phosphate. It functions in the pathway carbohydrate degradation; pentose phosphate pathway; D-glyceraldehyde 3-phosphate and beta-D-fructose 6-phosphate from D-ribose 5-phosphate and D-xylulose 5-phosphate (non-oxidative stage): step 2/3. In terms of biological role, transaldolase is important for the balance of metabolites in the pentose-phosphate pathway. In Vibrio parahaemolyticus serotype O3:K6 (strain RIMD 2210633), this protein is Transaldolase.